The primary structure comprises 423 residues: D-tagatose-1,6-bisphosphate aldolase subunit GatZ (423 aa).

It belongs to the GatZ/KbaZ family. GatZ subfamily. In terms of assembly, forms a complex with GatY.

The protein operates within carbohydrate metabolism; D-tagatose 6-phosphate degradation; D-glyceraldehyde 3-phosphate and glycerone phosphate from D-tagatose 6-phosphate: step 2/2. Component of the tagatose-1,6-bisphosphate aldolase GatYZ that is required for full activity and stability of the Y subunit. Could have a chaperone-like function for the proper and stable folding of GatY. When expressed alone, GatZ does not show any aldolase activity. Is involved in the catabolism of galactitol. The protein is D-tagatose-1,6-bisphosphate aldolase subunit GatZ of Salmonella newport (strain SL254).